The primary structure comprises 191 residues: MTDSSNAHEAENPTVPTPDNEIQDLQQEIATLKAELKEKNDKYLMVLAESENARKRMQKERQEMMQYAVENALIDFLVPIESMEKALGFASQMSDEVKNWALGFNMILQQFKQVFEEKGIVEYSSVGQKFNPFLHEAVETEETTKVPEGTIVEEFSKGYKIGDRPIRVAKVKVSKAPAPQGTEAEIENNNE.

Residues 1 to 11 are compositionally biased toward basic and acidic residues; the sequence is MTDSSNAHEAE. 2 disordered regions span residues 1-22 and 172-191; these read MTDSSNAHEAENPTVPTPDNEI and KVSKAPAPQGTEAEIENNNE.

The protein belongs to the GrpE family. Homodimer.

The protein localises to the cytoplasm. Functionally, participates actively in the response to hyperosmotic and heat shock by preventing the aggregation of stress-denatured proteins, in association with DnaK and GrpE. It is the nucleotide exchange factor for DnaK and may function as a thermosensor. Unfolded proteins bind initially to DnaJ; upon interaction with the DnaJ-bound protein, DnaK hydrolyzes its bound ATP, resulting in the formation of a stable complex. GrpE releases ADP from DnaK; ATP binding to DnaK triggers the release of the substrate protein, thus completing the reaction cycle. Several rounds of ATP-dependent interactions between DnaJ, DnaK and GrpE are required for fully efficient folding. This is Protein GrpE from Chlamydia abortus (strain DSM 27085 / S26/3) (Chlamydophila abortus).